We begin with the raw amino-acid sequence, 397 residues long: Ubiquitin-like modifier-activating enzyme 5 (397 aa).

ATP contacts are provided by glycine 77, aspartate 98, lysine 121, asparagine 144, and asparagine 178. The Zn(2+) site is built by cysteine 220 and cysteine 223. Residue cysteine 244 is the Glycyl thioester intermediate of the active site. Zn(2+) contacts are provided by cysteine 297 and cysteine 302.

This sequence belongs to the ubiquitin-activating E1 family. UBA5 subfamily.

Its function is as follows. E1-like enzyme which activates UFM1. This Culex quinquefasciatus (Southern house mosquito) protein is Ubiquitin-like modifier-activating enzyme 5.